Here is a 258-residue protein sequence, read N- to C-terminus: Thiazole synthase (258 aa).

Lysine 97 acts as the Schiff-base intermediate with DXP in catalysis. 1-deoxy-D-xylulose 5-phosphate-binding positions include glycine 158, alanine 184–glycine 185, and asparagine 206–threonine 207.

It belongs to the ThiG family. In terms of assembly, homotetramer. Forms heterodimers with either ThiH or ThiS.

It localises to the cytoplasm. It carries out the reaction [ThiS sulfur-carrier protein]-C-terminal-Gly-aminoethanethioate + 2-iminoacetate + 1-deoxy-D-xylulose 5-phosphate = [ThiS sulfur-carrier protein]-C-terminal Gly-Gly + 2-[(2R,5Z)-2-carboxy-4-methylthiazol-5(2H)-ylidene]ethyl phosphate + 2 H2O + H(+). It participates in cofactor biosynthesis; thiamine diphosphate biosynthesis. Catalyzes the rearrangement of 1-deoxy-D-xylulose 5-phosphate (DXP) to produce the thiazole phosphate moiety of thiamine. Sulfur is provided by the thiocarboxylate moiety of the carrier protein ThiS. In vitro, sulfur can be provided by H(2)S. The protein is Thiazole synthase of Marinomonas sp. (strain MWYL1).